Here is an 85-residue protein sequence, read N- to C-terminus: Alpha-insect toxin BjaIT (85 aa).

The first 19 residues, 1–19 (MNYLVVICFALLLMTGVES), serve as a signal peptide directing secretion. The 63-residue stretch at 21-83 (RDAYIADNLN…VPIRIPGACR (63 aa)) folds into the LCN-type CS-alpha/beta domain. Cystine bridges form between Cys31–Cys82, Cys35–Cys55, Cys41–Cys65, and Cys45–Cys67. The residue at position 83 (Arg83) is an Arginine amide.

It belongs to the long (4 C-C) scorpion toxin superfamily. Sodium channel inhibitor family. Alpha subfamily. In terms of tissue distribution, expressed by the venom gland.

The protein localises to the secreted. In terms of biological role, alpha toxins bind voltage-independently at site-3 of sodium channels (Nav) and inhibit the inactivation of the activated channels, thereby blocking neuronal transmission. This toxin is active against insects (para/tipE). In Hottentotta judaicus (Black scorpion), this protein is Alpha-insect toxin BjaIT.